A 395-amino-acid chain; its full sequence is Lipoyl synthase, mitochondrial (395 aa).

Residues 1-24 (MVKLPSASRIRSLATVPSTATRAF) constitute a mitochondrion transit peptide. 7 residues coordinate [4Fe-4S] cluster: C107, C112, C118, C137, C141, C144, and S357. In terms of domain architecture, Radical SAM core spans 122–346 (GKGNATATIM…KNVAEGMGFL (225 aa)).

This sequence belongs to the radical SAM superfamily. Lipoyl synthase family. Requires [4Fe-4S] cluster as cofactor.

It localises to the mitochondrion. It carries out the reaction [[Fe-S] cluster scaffold protein carrying a second [4Fe-4S](2+) cluster] + N(6)-octanoyl-L-lysyl-[protein] + 2 oxidized [2Fe-2S]-[ferredoxin] + 2 S-adenosyl-L-methionine + 4 H(+) = [[Fe-S] cluster scaffold protein] + N(6)-[(R)-dihydrolipoyl]-L-lysyl-[protein] + 4 Fe(3+) + 2 hydrogen sulfide + 2 5'-deoxyadenosine + 2 L-methionine + 2 reduced [2Fe-2S]-[ferredoxin]. The protein operates within protein modification; protein lipoylation via endogenous pathway; protein N(6)-(lipoyl)lysine from octanoyl-[acyl-carrier-protein]: step 2/2. In terms of biological role, catalyzes the radical-mediated insertion of two sulfur atoms into the C-6 and C-8 positions of the octanoyl moiety bound to the lipoyl domains of lipoate-dependent enzymes, thereby converting the octanoylated domains into lipoylated derivatives. This chain is Lipoyl synthase, mitochondrial, found in Cryptococcus neoformans var. neoformans serotype D (strain B-3501A) (Filobasidiella neoformans).